Here is a 68-residue protein sequence, read N- to C-terminus: Cell division protein ZapB (68 aa).

Positions 3–58 form a coiled coil; sequence LELLSKLETKIQAALETIELLKMELEEEKQKNHTLNEQNQQLSQDLTSWNEKVTGL.

Belongs to the ZapB family. Homodimer. The ends of the coiled-coil dimer bind to each other, forming polymers. Interacts with FtsZ.

The protein localises to the cytoplasm. Its function is as follows. Non-essential, abundant cell division factor that is required for proper Z-ring formation. It is recruited early to the divisome by direct interaction with FtsZ, stimulating Z-ring assembly and thereby promoting cell division earlier in the cell cycle. Its recruitment to the Z-ring requires functional FtsA or ZipA. The polypeptide is Cell division protein ZapB (Shewanella loihica (strain ATCC BAA-1088 / PV-4)).